A 480-amino-acid chain; its full sequence is Ribulose bisphosphate carboxylase large chain (480 aa).

A propeptide spanning residues 1–2 is cleaved from the precursor; the sequence is MS. At Pro-3 the chain carries N-acetylproline. Residue Lys-14 is modified to N6,N6,N6-trimethyllysine. Asn-123 and Thr-173 together coordinate substrate. Lys-175 acts as the Proton acceptor in catalysis. A substrate-binding site is contributed by Lys-177. Lys-201, Asp-203, and Glu-204 together coordinate Mg(2+). Lys-201 bears the N6-carboxylysine mark. His-294 serves as the catalytic Proton acceptor. Positions 295, 327, and 379 each coordinate substrate.

It belongs to the RuBisCO large chain family. Type I subfamily. In terms of assembly, heterohexadecamer of 8 large chains and 8 small chains; disulfide-linked. The disulfide link is formed within the large subunit homodimers. Requires Mg(2+) as cofactor. In terms of processing, the disulfide bond which can form in the large chain dimeric partners within the hexadecamer appears to be associated with oxidative stress and protein turnover.

It localises to the plastid. Its subcellular location is the chloroplast. It carries out the reaction 2 (2R)-3-phosphoglycerate + 2 H(+) = D-ribulose 1,5-bisphosphate + CO2 + H2O. The enzyme catalyses D-ribulose 1,5-bisphosphate + O2 = 2-phosphoglycolate + (2R)-3-phosphoglycerate + 2 H(+). Its function is as follows. RuBisCO catalyzes two reactions: the carboxylation of D-ribulose 1,5-bisphosphate, the primary event in carbon dioxide fixation, as well as the oxidative fragmentation of the pentose substrate in the photorespiration process. Both reactions occur simultaneously and in competition at the same active site. The sequence is that of Ribulose bisphosphate carboxylase large chain from Rivina humilis (Rougeplant).